Reading from the N-terminus, the 564-residue chain is Agglutinin (564 aa).

Positions 1–24 (MYAVATWLCFGSTSGWSFTLEDNN) are cleaved as a signal peptide. Beta-D-galactose is bound at residue 32 to 34 (IIN). N-linked (GlcNAc...) asparagine glycosylation occurs at Asn34. Active-site residues include Tyr104, Tyr147, Glu200, and Arg203. Residues 104–105 (YV) and 145–147 (GNY) contribute to the AMP site. N-linked (GlcNAc...) asparagine glycosylation is present at Asn259. Residues Cys282 and Cys306 are joined by a disulfide bond. Positions 291 to 302 (SLLIRPVVPNFN) are cleaved as a propeptide — linker peptide. Positions 309 to 436 (PEPIVRIVGR…YAVSQGWLPT (128 aa)) constitute a Ricin B-type lectin 1 domain. Residues Ile312, 324 to 328 (DVTGE), Gln337, Lys342, and Asn348 contribute to the beta-D-galactose site. A 1-alpha repeat occupies 319 to 361 (NGLCVDVTGEEFFDGNPIQLWPCKSNTDWNQLWTLRKDSTIRS). Cys322 and Cys341 are disulfide-bonded. A 1-beta repeat occupies 362-402 (NGKCLTISKSSPRQQVVIYNCSTATVGATRWQIWDNRTIIN). An intrachain disulfide couples Cys365 to Cys382. N-linked (GlcNAc...) asparagine glycans are attached at residues Asn397 and Asn437. The stretch at 405–437 (SGLVLAATSGNSGTKLTVQTNIYAVSQGWLPTN) is one 1-gamma repeat. Residue Asn437 coordinates beta-D-galactose. The Ricin B-type lectin 2 domain occupies 439–563 (TQPFVTTIVG…GNLNQIWLPL (125 aa)). The 2-alpha repeat unit spans residues 450–485 (YGMCLQANSGKVWLEDCTSEKAEQQWALYADGSIRP). 2 cysteine pairs are disulfide-bonded: Cys453/Cys466 and Cys492/Cys509. The stretch at 489 to 528 (RDNCLTTDANIKGTVVKILSCGPASSGQRWMFKNDGTILN) is one 2-beta repeat. The stretch at 531–558 (NGLVLDVRRSDPSLKQIIVHPFHGNLNQ) is one 2-gamma repeat.

In the N-terminal section; belongs to the ribosome-inactivating protein family. Type 2 RIP subfamily.

The catalysed reaction is Endohydrolysis of the N-glycosidic bond at one specific adenosine on the 28S rRNA.. This chain is Agglutinin, found in Ricinus communis (Castor bean).